A 559-amino-acid chain; its full sequence is Glucose-6-phosphate isomerase (559 aa).

Catalysis depends on glutamate 363, which acts as the Proton donor. Catalysis depends on residues histidine 394 and lysine 523.

This sequence belongs to the GPI family.

Its subcellular location is the cytoplasm. The enzyme catalyses alpha-D-glucose 6-phosphate = beta-D-fructose 6-phosphate. It participates in carbohydrate biosynthesis; gluconeogenesis. It functions in the pathway carbohydrate degradation; glycolysis; D-glyceraldehyde 3-phosphate and glycerone phosphate from D-glucose: step 2/4. Catalyzes the reversible isomerization of glucose-6-phosphate to fructose-6-phosphate. This is Glucose-6-phosphate isomerase from Bartonella henselae (strain ATCC 49882 / DSM 28221 / CCUG 30454 / Houston 1) (Rochalimaea henselae).